Consider the following 227-residue polypeptide: MTAAAVLAGHEGPAAAVSVPLLVKRLGRVDYAPAWEAMQHFTASRGEDTADEIWLLEHPPVYTLGQAGRPEHLLRNDAGIPLVKIDRGGQITYHGPGQLVAYLLLDLRRRHLKVRELVALMEQAVIDCLAEYGLHAERKDGAPGVYIDGAKIAALGLRVRNGCSYHGLALNVDADLAPFGWINPCGYEGLQTIRLKDFGVGDDVAAVGERLLQHLLRLLPPGVVPSR.

The region spanning glutamate 47–valine 223 is the BPL/LPL catalytic domain. Residues arginine 87 to histidine 94, alanine 154 to glycine 156, and glycine 167 to alanine 169 each bind substrate. Catalysis depends on cysteine 185, which acts as the Acyl-thioester intermediate.

It belongs to the LipB family.

Its subcellular location is the cytoplasm. The enzyme catalyses octanoyl-[ACP] + L-lysyl-[protein] = N(6)-octanoyl-L-lysyl-[protein] + holo-[ACP] + H(+). Its pathway is protein modification; protein lipoylation via endogenous pathway; protein N(6)-(lipoyl)lysine from octanoyl-[acyl-carrier-protein]: step 1/2. Functionally, catalyzes the transfer of endogenously produced octanoic acid from octanoyl-acyl-carrier-protein onto the lipoyl domains of lipoate-dependent enzymes. Lipoyl-ACP can also act as a substrate although octanoyl-ACP is likely to be the physiological substrate. In Azoarcus sp. (strain BH72), this protein is Octanoyltransferase.